A 293-amino-acid polypeptide reads, in one-letter code: Ribosomal protein L11 methyltransferase (293 aa).

T145, G166, D188, and N230 together coordinate S-adenosyl-L-methionine.

It belongs to the methyltransferase superfamily. PrmA family.

It is found in the cytoplasm. The enzyme catalyses L-lysyl-[protein] + 3 S-adenosyl-L-methionine = N(6),N(6),N(6)-trimethyl-L-lysyl-[protein] + 3 S-adenosyl-L-homocysteine + 3 H(+). Methylates ribosomal protein L11. In Salmonella agona (strain SL483), this protein is Ribosomal protein L11 methyltransferase.